The chain runs to 78 residues: Acyl carrier protein (78 aa).

The Carrier domain maps to M1–G76. S36 bears the O-(pantetheine 4'-phosphoryl)serine mark.

The protein belongs to the acyl carrier protein (ACP) family. 4'-phosphopantetheine is transferred from CoA to a specific serine of apo-ACP by AcpS. This modification is essential for activity because fatty acids are bound in thioester linkage to the sulfhydryl of the prosthetic group.

It is found in the cytoplasm. It participates in lipid metabolism; fatty acid biosynthesis. In terms of biological role, carrier of the growing fatty acid chain in fatty acid biosynthesis. The chain is Acyl carrier protein from Bdellovibrio bacteriovorus (strain ATCC 15356 / DSM 50701 / NCIMB 9529 / HD100).